The sequence spans 294 residues: Elongation factor Ts (294 aa).

Residues Thr80–Val83 form an involved in Mg(2+) ion dislocation from EF-Tu region.

This sequence belongs to the EF-Ts family.

The protein resides in the cytoplasm. In terms of biological role, associates with the EF-Tu.GDP complex and induces the exchange of GDP to GTP. It remains bound to the aminoacyl-tRNA.EF-Tu.GTP complex up to the GTP hydrolysis stage on the ribosome. The sequence is that of Elongation factor Ts from Polynucleobacter asymbioticus (strain DSM 18221 / CIP 109841 / QLW-P1DMWA-1) (Polynucleobacter necessarius subsp. asymbioticus).